A 197-amino-acid polypeptide reads, in one-letter code: dTTP/UTP pyrophosphatase (197 aa).

Aspartate 70 acts as the Proton acceptor in catalysis.

It belongs to the Maf family. YhdE subfamily. A divalent metal cation is required as a cofactor.

The protein resides in the cytoplasm. The catalysed reaction is dTTP + H2O = dTMP + diphosphate + H(+). It catalyses the reaction UTP + H2O = UMP + diphosphate + H(+). Its function is as follows. Nucleoside triphosphate pyrophosphatase that hydrolyzes dTTP and UTP. May have a dual role in cell division arrest and in preventing the incorporation of modified nucleotides into cellular nucleic acids. This chain is dTTP/UTP pyrophosphatase (yhdE), found in Escherichia coli O157:H7.